The primary structure comprises 622 residues: FERM domain-containing protein 6 (622 aa).

The FERM domain maps to Arg-16–Gln-328. Residues Lys-364–Arg-445 form a disordered region. Composition is skewed to low complexity over residues His-384 to Ser-395 and Ser-425 to Val-438. Phosphoserine is present on Ser-522. Thr-523 is subject to Phosphothreonine. Phosphoserine occurs at positions 525, 542, and 544.

The protein localises to the cytoplasm. It localises to the cell membrane. The polypeptide is FERM domain-containing protein 6 (FRMD6) (Homo sapiens (Human)).